The chain runs to 534 residues: Peptide chain release factor 3 (534 aa).

One can recognise a tr-type G domain in the interval 9–278; the sequence is ARRRTFAIIS…FFVEHAPSPQ (270 aa). GTP is bound by residues 18–25, 86–90, and 140–143; these read SHPDAGKT, DTPGH, and NKLD.

This sequence belongs to the TRAFAC class translation factor GTPase superfamily. Classic translation factor GTPase family. PrfC subfamily.

Its subcellular location is the cytoplasm. Its function is as follows. Increases the formation of ribosomal termination complexes and stimulates activities of RF-1 and RF-2. It binds guanine nucleotides and has strong preference for UGA stop codons. It may interact directly with the ribosome. The stimulation of RF-1 and RF-2 is significantly reduced by GTP and GDP, but not by GMP. In Xylella fastidiosa (strain M23), this protein is Peptide chain release factor 3.